We begin with the raw amino-acid sequence, 135 residues long: MARVTVEDCIDKVENRFELVLLASHRARLVSQGAPITVDRDNDKNPVVALREIADETLSPGDLKEDLIHSLQKHVEVDEPEPDPASLVQTEAAPAFAEAAEEEDQPEALTFDRMSEEELLAGIEGLVPPEKSDDY.

Belongs to the RNA polymerase subunit omega family. The RNAP catalytic core consists of 2 alpha, 1 beta, 1 beta' and 1 omega subunit. When a sigma factor is associated with the core the holoenzyme is formed, which can initiate transcription.

The enzyme catalyses RNA(n) + a ribonucleoside 5'-triphosphate = RNA(n+1) + diphosphate. Functionally, promotes RNA polymerase assembly. Latches the N- and C-terminal regions of the beta' subunit thereby facilitating its interaction with the beta and alpha subunits. The protein is DNA-directed RNA polymerase subunit omega of Rhizobium meliloti (strain 1021) (Ensifer meliloti).